The chain runs to 705 residues: Probable E3 ubiquitin-protein ligase MID2 (705 aa).

The RING-type zinc-finger motif lies at 30 to 80; sequence CPICLELFEDPLLLPCAHSLCFSCAHRILVSSCSSGESIEPITAFQCPTCR. The B box-type 1; degenerate zinc-finger motif lies at 137–184; it reads IACQFCEQDPPRDAVKTCITCEVSYCDRCLRATHPNKKPFTSHRLVEP. The B box-type 2 zinc finger occupies 190-232; it reads LRGITCLDHENEKVNMYCVSDDQLICALCKLVGRHRDHQVASL. Positions 195, 198, 218, and 224 each coordinate Zn(2+). Positions 233 to 301 form a coiled coil; the sequence is NDRFEKLKQT…IIQQRKQMIA (69 aa). The 60-residue stretch at 340–399 folds into the COS domain; sequence LKENDQARFLQSAKNIAERVAMATASSQVLIPDINFNDAFENFALDFSREKKLLEGLDYL. The Fibronectin type-III domain maps to 404-504; it reads PPSIREELCT…EPTRLKTNSQ (101 aa). Positions 486–679 constitute a B30.2/SPRY domain; the sequence is INQAGSRNSE…ILSGLPAPDF (194 aa).

The protein belongs to the TRIM/RBCC family. As to quaternary structure, homodimer or heterodimer with MID1. Interacts with IGBP1. In terms of processing, phosphorylated on serine and threonine residues. In terms of tissue distribution, low abundance in brain and lung, with even lower levels in heart, liver, and kidney.

It localises to the cytoplasm. Its subcellular location is the cytoskeleton. The catalysed reaction is S-ubiquitinyl-[E2 ubiquitin-conjugating enzyme]-L-cysteine + [acceptor protein]-L-lysine = [E2 ubiquitin-conjugating enzyme]-L-cysteine + N(6)-ubiquitinyl-[acceptor protein]-L-lysine.. It functions in the pathway protein modification; protein ubiquitination. In terms of biological role, E3 ubiquitin ligase that plays a role in microtubule stabilization. Mediates the 'Lys-48'-linked polyubiquitination of LRRK2 to drive its localization to microtubules and its proteasomal degradation in neurons. This ubiquitination inhibits LRRK2 kinase activation by RAB29. This is Probable E3 ubiquitin-protein ligase MID2 (Mid2) from Mus musculus (Mouse).